The following is a 520-amino-acid chain: Probable DNA ligase (520 aa).

Glu-213 serves as a coordination point for ATP. Lys-215 (N6-AMP-lysine intermediate) is an active-site residue. The ATP site is built by Arg-220, Arg-235, Glu-264, Phe-300, Arg-372, and Lys-378.

It belongs to the ATP-dependent DNA ligase family. The cofactor is Mg(2+).

The catalysed reaction is ATP + (deoxyribonucleotide)n-3'-hydroxyl + 5'-phospho-(deoxyribonucleotide)m = (deoxyribonucleotide)n+m + AMP + diphosphate.. In terms of biological role, DNA ligase that seals nicks in double-stranded DNA during DNA replication, DNA recombination and DNA repair. The polypeptide is Probable DNA ligase (Mycobacterium sp. (strain JLS)).